Reading from the N-terminus, the 550-residue chain is Glucose import ATP-binding protein TsgD13 (550 aa).

ABC transporter domains are found at residues Leu7–Glu270 and Leu287–Gly533. Gly39 to Ser46 is an ATP binding site. Positions Met529–Ser550 are disordered.

It belongs to the ABC transporter superfamily. As to quaternary structure, the complex is composed of two ATP-binding proteins (TsgD13), two transmembrane proteins (TsgB13 and TsgC13) and a solute-binding protein (TsgA13).

It localises to the cell membrane. The enzyme catalyses D-glucose(out) + ATP + H2O = D-glucose(in) + ADP + phosphate + H(+). In terms of biological role, part of an ABC transporter complex involved in glucose import. Responsible for energy coupling to the transport system. The chain is Glucose import ATP-binding protein TsgD13 (tsgD13) from Haloferax volcanii (strain ATCC 29605 / DSM 3757 / JCM 8879 / NBRC 14742 / NCIMB 2012 / VKM B-1768 / DS2) (Halobacterium volcanii).